The following is a 778-amino-acid chain: LPS-assembly protein LptD (778 aa).

The signal sequence occupies residues 1-23 (MKTRYSVLSVAMTAAFYTQYAQA).

The protein belongs to the LptD family. As to quaternary structure, component of the lipopolysaccharide transport and assembly complex. Interacts with LptE and LptA.

The protein localises to the cell outer membrane. Together with LptE, is involved in the assembly of lipopolysaccharide (LPS) at the surface of the outer membrane. The chain is LPS-assembly protein LptD from Actinobacillus pleuropneumoniae serotype 5b (strain L20).